The sequence spans 472 residues: UDP-glycosyltransferase 100 (472 aa).

His-15 functions as the Proton acceptor in the catalytic mechanism. His-15 lines the an anthocyanidin pocket. Asp-117 functions as the Charge relay in the catalytic mechanism. UDP-alpha-D-glucose-binding residues include Ala-344, Gln-346, His-361, Trp-364, Asn-365, Ser-366, and Glu-369. Gly-384 lines the an anthocyanidin pocket. The UDP-alpha-D-glucose site is built by Glu-385 and Gln-386.

This sequence belongs to the UDP-glycosyltransferase family.

It carries out the reaction (20S)-protopanaxadiol + UDP-alpha-D-glucose = (20S)-ginsenoside C-K + UDP + H(+). The enzyme catalyses (20S)-protopanaxatriol + UDP-alpha-D-glucose = (20S)-ginsenoside Rh1 + UDP + H(+). The catalysed reaction is (20S)-ginsenoside F1 + UDP-alpha-D-glucose = (20S)-ginsenoside Rg1 + UDP + H(+). It functions in the pathway secondary metabolite biosynthesis; terpenoid biosynthesis. In terms of biological role, component of the dammarane-type triterpene saponins (e.g. PPT-type ginsenosides or panaxosides) biosynthetic pathway. Glycosyltransferase that catalyzes the biosynthesis of ginsenoside Rh1 from protopanaxatriol (PPT) and the conversion of ginsenoside F1 to ginsenoside Rg1. The polypeptide is UDP-glycosyltransferase 100 (Panax ginseng (Korean ginseng)).